Here is a 312-residue protein sequence, read N- to C-terminus: Putative endo-1,4-beta-xylanase (312 aa).

The region spanning 1–301 (MKQQYLLDYE…KPCFYSFLQA (301 aa)) is the GH10 domain. Glu-104 acts as the Proton donor in catalysis. Glu-216 serves as the catalytic Nucleophile.

The protein belongs to the glycosyl hydrolase 10 (cellulase F) family.

The catalysed reaction is Endohydrolysis of (1-&gt;4)-beta-D-xylosidic linkages in xylans.. Its pathway is glycan degradation; xylan degradation. Its function is as follows. Could be a xylanase. This is Putative endo-1,4-beta-xylanase from Caldicellulosiruptor saccharolyticus (Caldocellum saccharolyticum).